Consider the following 117-residue polypeptide: Ig heavy chain V region RF (117 aa).

An N-terminal signal peptide occupies residues Met-1–Cys-19. The tract at residues Asp-20–Ser-49 is framework-1. Cys-41 and Cys-115 form a disulfide bridge. The complementarity-determining-1 stretch occupies residues Ser-50–Ser-54. Positions Trp-55 to Ala-68 are framework-2. The interval Ala-69–Gly-85 is complementarity-determining-2. The segment at Arg-86–Arg-117 is framework-3.

In Mus musculus (Mouse), this protein is Ig heavy chain V region RF.